The chain runs to 367 residues: Uroporphyrinogen decarboxylase (367 aa).

N-acetylmethionine is present on Met1. The coproporphyrinogen I site is built by Arg37, Ala39, Arg41, Arg50, Asp86, Tyr164, Ser219, and His339. 3 residues coordinate coproporphyrinogen III: Arg37, Ala39, and Arg41. Positions 86, 164, 219, and 339 each coordinate coproporphyrinogen III.

The protein belongs to the uroporphyrinogen decarboxylase family. Homodimer.

The protein resides in the cytoplasm. It localises to the cytosol. It catalyses the reaction uroporphyrinogen III + 4 H(+) = coproporphyrinogen III + 4 CO2. It carries out the reaction uroporphyrinogen I + 4 H(+) = coproporphyrinogen I + 4 CO2. Its pathway is porphyrin-containing compound metabolism; protoporphyrin-IX biosynthesis; coproporphyrinogen-III from 5-aminolevulinate: step 4/4. In terms of biological role, catalyzes the sequential decarboxylation of the four acetate side chains of uroporphyrinogen to form coproporphyrinogen and participates in the fifth step in the heme biosynthetic pathway. Isomer I or isomer III of uroporphyrinogen may serve as substrate, but only coproporphyrinogen III can ultimately be converted to heme. In vitro also decarboxylates pentacarboxylate porphyrinogen I. This is Uroporphyrinogen decarboxylase from Pongo abelii (Sumatran orangutan).